The following is a 117-amino-acid chain: SPbeta prophage-derived uncharacterized protein YosL (117 aa).

This is SPbeta prophage-derived uncharacterized protein YosL (yosL) from Bacillus subtilis (strain 168).